Reading from the N-terminus, the 219-residue chain is Large ribosomal subunit protein uL1 (219 aa).

It belongs to the universal ribosomal protein uL1 family. Part of the 50S ribosomal subunit.

Its function is as follows. Binds directly to 23S rRNA. Probably involved in E site tRNA release. Protein L1 is also a translational repressor protein, it controls the translation of its operon by binding to its mRNA. This chain is Large ribosomal subunit protein uL1, found in Pyrococcus horikoshii (strain ATCC 700860 / DSM 12428 / JCM 9974 / NBRC 100139 / OT-3).